The following is a 292-amino-acid chain: Inhibitory synaptic factor 1 (292 aa).

3 disordered regions span residues 1–25 (MNIRGTPDLGQPSDDPSSGGERERI), 122–186 (SDSV…ERVR), and 198–292 (CDDE…KGKN). Residues 23-63 (ERIRQRMKMVIGQLEDILRELKEVAKELREVVSQIDKLTSD) are a coiled coil. Over residues 198–214 (CDDEEGDGEEEAAEEEG) the composition is skewed to acidic residues. The span at 263 to 285 (RNSSTQTVSDKSTQTVLPYTATR) shows a compositional bias: polar residues.

This sequence belongs to the INSYN1 family. As to quaternary structure, interacts with GPHN.

Its subcellular location is the postsynaptic density. In terms of biological role, component of the protein machinery at the inhibitory synapses, probably acting as a scaffold. Inhibitory synapses dampen neuronal activity through postsynaptic hyperpolarization. This synaptic inhibition is fundamental for the functioning of the central nervous system, shaping and orchestrating the flow of information through neuronal networks to generate a precise neural code. This Bos taurus (Bovine) protein is Inhibitory synaptic factor 1.